The following is a 260-amino-acid chain: 2-oxo-tetronate isomerase (260 aa).

E143 functions as the Proton donor/acceptor in the catalytic mechanism. Residues E143, D178, Q204, and E240 each contribute to the Mg(2+) site. Catalysis depends on E240, which acts as the Proton donor/acceptor.

This sequence belongs to the hyi family. OtnI subfamily.

The enzyme catalyses 2-dehydro-L-erythronate = 3-dehydro-L-erythronate. It carries out the reaction 2-dehydro-D-erythronate = 3-dehydro-D-erythronate. In terms of biological role, catalyzes the isomerization of 2-oxo-tetronate to 3-oxo-tetronate. This Cupriavidus necator (strain ATCC 17699 / DSM 428 / KCTC 22496 / NCIMB 10442 / H16 / Stanier 337) (Ralstonia eutropha) protein is 2-oxo-tetronate isomerase.